Consider the following 549-residue polypeptide: Chaperonin GroEL (549 aa).

ATP contacts are provided by residues 30 to 33 (TLGP), Lys-51, 87 to 91 (DGTTT), Gly-415, 479 to 481 (NAA), and Asp-495.

It belongs to the chaperonin (HSP60) family. In terms of assembly, forms a cylinder of 14 subunits composed of two heptameric rings stacked back-to-back. Interacts with the co-chaperonin GroES.

It is found in the cytoplasm. It carries out the reaction ATP + H2O + a folded polypeptide = ADP + phosphate + an unfolded polypeptide.. Its function is as follows. Together with its co-chaperonin GroES, plays an essential role in assisting protein folding. The GroEL-GroES system forms a nano-cage that allows encapsulation of the non-native substrate proteins and provides a physical environment optimized to promote and accelerate protein folding. This is Chaperonin GroEL from Leptothrix cholodnii (strain ATCC 51168 / LMG 8142 / SP-6) (Leptothrix discophora (strain SP-6)).